Here is a 386-residue protein sequence, read N- to C-terminus: Peroxisomal membrane protein PEX13 (386 aa).

The segment at 1-76 (MSSTAVPRPK…SSGTYGESNT (76 aa)) is disordered. Residues 1–263 (MSSTAVPRPK…KATRRKISWK (263 aa)) are Lumenal-facing. Residues 23–39 (RNAQSLSAMMTSNQQDS) show a composition bias toward polar residues. Low complexity predominate over residues 44 to 55 (ESNNSNSASESA). Residues 65–76 (LNSSGTYGESNT) show a composition bias toward polar residues. Residues 264-280 (PLLFFLMAVFGFPYLLN) form a helical membrane-spanning segment. Over 281–386 (KFITKLQTSG…EHVDDETRTH (106 aa)) the chain is Cytoplasmic. Residues 306-372 (SKLEFARALY…PYNYIEIIKR (67 aa)) form the SH3 domain.

The protein belongs to the peroxin-13 family. As to quaternary structure, interacts (via SH3 domain) with PEX14 (via SH3-binding motif); forming the PEX13-PEX14 docking complex.

The protein resides in the peroxisome membrane. Functionally, component of the PEX13-PEX14 docking complex, a translocon channel that specifically mediates the import of peroxisomal cargo proteins bound to PEX5 or PEX21 receptors. The PEX13-PEX14 docking complex forms a large import pore which can be opened to a diameter of about 9 nm. Mechanistically, PEX5 (or PEX21) receptor along with cargo proteins associates with the PEX14 subunit of the PEX13-PEX14 docking complex in the cytosol, leading to the insertion of the receptor into the organelle membrane with the concomitant translocation of the cargo into the peroxisome matrix. This chain is Peroxisomal membrane protein PEX13, found in Saccharomyces cerevisiae (strain ATCC 204508 / S288c) (Baker's yeast).